A 459-amino-acid chain; its full sequence is NADH-ubiquinone oxidoreductase chain 4 (459 aa).

13 consecutive transmembrane segments (helical) span residues 22–42 (HLSYTTLLFSFTIALLSLQWL), 61–81 (PISTPLLILTSWMTPLMILVS), 94–113 (RTFTTTIISLQISLTLAFSA), 114–134 (LEMMLFFTMFEATLIPTLIII), 146–166 (AGTYFLFYTLIGSLPLLIALT), 197–217 (WFALLMAFMIKMPLYGLHLWL), 225–245 (PIAGSMILAGVLLKLGGYGII), 258–278 (LSYPFMTLSLWGIIMTGLICL), 285–304 (SLIAYSSVGLMGLVISAALL), 308–330 (LSITGAIILMIAHGLSSSMLFCL), 352–372 (LLPLMTIWWLLASLMNMALPP), 380–400 (LTIIASLFSWANITIILTGLG), and 437–457 (LIMMLHMVPLILLMMKPQLMT).

This sequence belongs to the complex I subunit 4 family.

It is found in the mitochondrion membrane. It catalyses the reaction a ubiquinone + NADH + 5 H(+)(in) = a ubiquinol + NAD(+) + 4 H(+)(out). Core subunit of the mitochondrial membrane respiratory chain NADH dehydrogenase (Complex I) that is believed to belong to the minimal assembly required for catalysis. Complex I functions in the transfer of electrons from NADH to the respiratory chain. The immediate electron acceptor for the enzyme is believed to be ubiquinone. The chain is NADH-ubiquinone oxidoreductase chain 4 (MT-ND4) from Pelomedusa subrufa (African side-necked turtle).